The primary structure comprises 240 residues: Protein OPG176 (240 aa).

Belongs to the orthopoxvirus OPG176 family. As to quaternary structure, tetramer. Interacts with host MYD88, TRF4, TICAM2 and MAL.

In terms of biological role, BCL2-like protein which disrupts the host immune response by inhibiting the TLR4 signaling pathway leading to NF-kappa-B activation. Acts close to the plasma membrane and targets several host TIR-domain containing adapter proteins including MYD88, TIRAP, TRIF and TICAM2. In turn, blocks the host NF-kappa-B and TRIF-mediated IRF3 activation. This chain is Protein OPG176 (OPG176), found in Bos taurus (Bovine).